The chain runs to 380 residues: SAM and SH3 domain-containing protein 3 (380 aa).

The interval methionine 1–phenylalanine 174 is disordered. The span at leucine 22–valine 41 shows a compositional bias: low complexity. A phosphoserine mark is found at serine 27, serine 34, and serine 42. Position 61 is a phosphothreonine (threonine 61). A compositionally biased stretch (basic residues) spans methionine 84–valine 93. Phosphoserine is present on serine 97. Phosphothreonine is present on threonine 103. Serine 110 is modified (phosphoserine). Phosphothreonine is present on threonine 112. Phosphoserine is present on residues serine 113 and serine 120. Residues arginine 143–serine 158 show a composition bias toward polar residues. The 62-residue stretch at proline 173–glutamate 234 folds into the SH3 domain. Residues proline 252–tyrosine 316 enclose the SAM domain. Threonine 318 is subject to Phosphothreonine. The span at threonine 318–threonine 327 shows a compositional bias: acidic residues. A disordered region spans residues threonine 318–proline 380. Position 320 is a phosphoserine (serine 320).

The protein belongs to the SASH family.

May function as a signaling adapter protein in lymphocytes. In Bos taurus (Bovine), this protein is SAM and SH3 domain-containing protein 3.